We begin with the raw amino-acid sequence, 316 residues long: Adenine deaminase (316 aa).

Zn(2+)-binding residues include H14, H16, and H194. The active-site Proton donor is E197. Position 275 (D275) interacts with Zn(2+). D276 is a binding site for substrate.

This sequence belongs to the metallo-dependent hydrolases superfamily. Adenosine and AMP deaminases family. Adenine deaminase type 2 subfamily. Zn(2+) is required as a cofactor.

The enzyme catalyses adenine + H2O + H(+) = hypoxanthine + NH4(+). Its function is as follows. Catalyzes the hydrolytic deamination of adenine to hypoxanthine. Plays an important role in the purine salvage pathway and in nitrogen catabolism. In Pseudomonas paraeruginosa (strain DSM 24068 / PA7) (Pseudomonas aeruginosa (strain PA7)), this protein is Adenine deaminase.